The sequence spans 550 residues: Arginine--tRNA ligase (550 aa).

The 'HIGH' region motif lies at 130 to 140; sequence ANPTGPIHLGG.

Belongs to the class-I aminoacyl-tRNA synthetase family. Monomer.

The protein resides in the cytoplasm. The enzyme catalyses tRNA(Arg) + L-arginine + ATP = L-arginyl-tRNA(Arg) + AMP + diphosphate. The protein is Arginine--tRNA ligase (argS) of Corynebacterium glutamicum (strain ATCC 13032 / DSM 20300 / JCM 1318 / BCRC 11384 / CCUG 27702 / LMG 3730 / NBRC 12168 / NCIMB 10025 / NRRL B-2784 / 534).